The sequence spans 87 residues: Acyl-CoA-binding protein (87 aa).

Serine 2 carries the N-acetylserine modification. The 86-residue stretch at 2–87 folds into the ACB domain; sequence SQAEFEKAAE…VEELKQKYGI (86 aa). Lysine 8 carries the N6-acetyllysine; alternate modification. The residue at position 8 (lysine 8) is an N6-succinyllysine; alternate. Lysine 14 is an an acyl-CoA binding site. Lysine 17 is subject to N6-succinyllysine. Lysine 19 bears the N6-acetyllysine mark. At tyrosine 29 the chain carries Phosphotyrosine. An acyl-CoA contacts are provided by residues 29–33, lysine 51, lysine 55, and tyrosine 74; that span reads YSHYK. Lysine 51 carries the N6-acetyllysine modification. Lysine 55 carries the post-translational modification N6-acetyllysine; alternate. Lysine 55 bears the N6-succinyllysine; alternate mark. Lysine 55 is modified (N6-(2-hydroxyisobutyryl)lysine; alternate). Lysine 55 is subject to N6-malonyllysine; alternate. Lysine 77 bears the N6-acetyllysine; alternate mark. Lysine 77 carries the N6-succinyllysine; alternate modification.

It belongs to the ACBP family. As to quaternary structure, monomer.

The protein resides in the endoplasmic reticulum. The protein localises to the golgi apparatus. Functionally, binds medium- and long-chain acyl-CoA esters with very high affinity and may function as an intracellular carrier of acyl-CoA esters. It is also able to displace diazepam from the benzodiazepine (BZD) recognition site located on the GABA type A receptor. It is therefore possible that this protein also acts as a neuropeptide to modulate the action of the GABA receptor. The sequence is that of Acyl-CoA-binding protein (DBI) from Oryctolagus cuniculus (Rabbit).